The primary structure comprises 289 residues: Survival motor neuron protein (289 aa).

Residues 1-10 show a composition bias toward gly residues; it reads MAMGSGGGAG. Residues 1-27 are disordered; that stretch reads MAMGSGGGAGSEQEDTVLFRRGTGQSD. The segment at 11–42 is P1 (binding site for GEMIN2); the sequence is SEQEDTVLFRRGTGQSDDSDIWDDTALIKAYD. Residue T23 is modified to Phosphothreonine. Phosphoserine is present on residues S26 and S29. K49 is covalently cross-linked (Glycyl lysine isopeptide (Lys-Gly) (interchain with G-Cter in SUMO2)). The segment at 55 to 88 is disordered; the sequence is GDMCETSDKPKGTARRKPAKKNKNQKKNATAPLK. Residues 66–80 are compositionally biased toward basic residues; that stretch reads GTARRKPAKKNKNQK. The residue at position 67 (T67) is a Phosphothreonine. Residues 89–149 enclose the Tudor domain; it reads QWKAGDKCSA…LSPTCEVANN (61 aa). The interval 95 to 205 is required for interaction with RPP20/POP7; sequence KCSAVWSEDG…VPGAGLGPGK (111 aa). The interval 150 to 226 is disordered; it reads TEQNTQENES…PPPPPPFLPC (77 aa). Residues 171 to 181 are compositionally biased toward basic residues; that stretch reads RSLRSKAHSKS. A Glycyl lysine isopeptide (Lys-Gly) (interchain with G-Cter in SUMO2) cross-link involves residue K205. Residues 212–226 are compositionally biased toward pro residues; the sequence is GPPPPPPPPPPFLPC. Positions 235 to 262 are P2 (binding site for SM B); the sequence is PPIIPPPPPISPDCLDDTDALGSMLISW. The interval 274 to 289 is required for interaction with SYNCRIP; sequence GFRQNKKEGKKCSHTN.

It belongs to the SMN family. Homooligomer; may form higher order homooligomers in the dimer to octamer range. Part of the core SMN complex that contains SMN1, GEMIN2/SIP1, DDX20/GEMIN3, GEMIN4, GEMIN5, GEMIN6, GEMIN7, GEMIN8 and STRAP/UNRIP. Part of the SMN-Sm complex that contains SMN1, GEMIN2/SIP1, DDX20/GEMIN3, GEMIN4, GEMIN5, GEMIN6, GEMIN7, GEMIN8, STRAP/UNRIP and the Sm proteins SNRPB, SNRPD1, SNRPD2, SNRPD3, SNRPE, SNRPF and SNRPG. Component of an import snRNP complex composed of KPNB1, RNUT1, SMN1 and ZNF259. Interacts with DDX20, FBL, NOLA1, RNUT1 and with several spliceosomal snRNP core Sm proteins, including SNRPB, SNRPD1, SNRPD2, SNRPD3, SNRPE and ILF3. Interacts with GEMIN2; the interaction is direct. Interacts with GEMIN3; the interaction is direct. Interacts with GEMIN8; the interaction is direct. Interacts with SNRPB; the interaction is direct. Interacts (via Tudor domain) with SNRPD1 (via C-terminus); the interaction is direct. Interacts with SNRPD2; the interaction is direct. Interacts (via Tudor domain) with SNRPD3 (via C-terminus); the interaction is direct. Interacts with SNRPE; the interaction is direct. Interacts with OSTF1, LSM10, LSM11 and RPP20/POP7. Interacts (via C-terminal region) with ZPR1 (via C-terminal region). Interacts (via Tudor domain) with COIL. Interacts with SETX; recruits SETX to POLR2A. Interacts with POLR2A (via the C-terminal domain (CTD)). Interacts with PRMT5. Interacts with XRN2. Interacts (via C-terminus) with FMR1 (via C-terminus); the interaction is direct and occurs in a RNA-independent manner. Interacts with SYNCRIP. Interacts (via Tudor domain) with SF3B2 (methylated form). Interacts with WRAP53/TCAB1. Interacts (via Tudor domain) with ELAVL4 in an RNA-independent manner; the interaction is required for localization of ELAVL4 to RNA granules. Interacts with FRG1.

It is found in the nucleus. Its subcellular location is the gem. It localises to the cajal body. The protein localises to the cytoplasm. The protein resides in the cytoplasmic granule. It is found in the perikaryon. Its subcellular location is the cell projection. It localises to the neuron projection. The protein localises to the axon. The protein resides in the myofibril. It is found in the sarcomere. Its subcellular location is the z line. Functionally, the SMN complex catalyzes the assembly of small nuclear ribonucleoproteins (snRNPs), the building blocks of the spliceosome, and thereby plays an important role in the splicing of cellular pre-mRNAs. Most spliceosomal snRNPs contain a common set of Sm proteins SNRPB, SNRPD1, SNRPD2, SNRPD3, SNRPE, SNRPF and SNRPG that assemble in a heptameric protein ring on the Sm site of the small nuclear RNA to form the core snRNP (Sm core). In the cytosol, the Sm proteins SNRPD1, SNRPD2, SNRPE, SNRPF and SNRPG are trapped in an inactive 6S pICln-Sm complex by the chaperone CLNS1A that controls the assembly of the core snRNP. To assemble core snRNPs, the SMN complex accepts the trapped 5Sm proteins from CLNS1A forming an intermediate. Binding of snRNA inside 5Sm ultimately triggers eviction of the SMN complex, thereby allowing binding of SNRPD3 and SNRPB to complete assembly of the core snRNP. Within the SMN complex, SMN1 acts as a structural backbone and together with GEMIN2 it gathers the Sm complex subunits. Ensures the correct splicing of U12 intron-containing genes that may be important for normal motor and proprioceptive neurons development. Also required for resolving RNA-DNA hybrids created by RNA polymerase II, that form R-loop in transcription terminal regions, an important step in proper transcription termination. May also play a role in the metabolism of small nucleolar ribonucleoprotein (snoRNPs). The sequence is that of Survival motor neuron protein (Smn1) from Rattus norvegicus (Rat).